The primary structure comprises 226 residues: NAD(P)H-hydrate epimerase (226 aa).

The YjeF N-terminal domain maps to 10–215 (AIELDLDLFE…ALQRKYQLNL (206 aa)). A (6S)-NADPHX-binding site is contributed by 58-62 (NNGGD). Asn59 and Asp123 together coordinate K(+). Residues 127-133 (GFGFKPP) and Asp156 contribute to the (6S)-NADPHX site. A K(+)-binding site is contributed by Ser159.

The protein belongs to the NnrE/AIBP family. The cofactor is K(+).

The enzyme catalyses (6R)-NADHX = (6S)-NADHX. It catalyses the reaction (6R)-NADPHX = (6S)-NADPHX. Catalyzes the epimerization of the S- and R-forms of NAD(P)HX, a damaged form of NAD(P)H that is a result of enzymatic or heat-dependent hydration. This is a prerequisite for the S-specific NAD(P)H-hydrate dehydratase to allow the repair of both epimers of NAD(P)HX. The polypeptide is NAD(P)H-hydrate epimerase (Drosophila pseudoobscura pseudoobscura (Fruit fly)).